Consider the following 142-residue polypeptide: Class II hydrophobin 7 (142 aa).

The signal sequence occupies residues 1 to 16 (MKFLTVAIVLAAAASA). Intrachain disulfides connect cysteine 73-cysteine 123, cysteine 84-cysteine 114, cysteine 85-cysteine 97, and cysteine 124-cysteine 135.

The protein belongs to the cerato-ulmin hydrophobin family. In terms of assembly, homodimer. Homodimers further self-assemble to form highly ordered films at water-air interfaces through intermolecular interactions.

The protein localises to the secreted. It localises to the cell wall. Aerial growth, conidiation, and dispersal of filamentous fungi in the environment rely upon a capability of their secreting small amphipathic proteins called hydrophobins (HPBs) with low sequence identity. Class I can self-assemble into an outermost layer of rodlet bundles on aerial cell surfaces, conferring cellular hydrophobicity that supports fungal growth, development and dispersal; whereas Class II form highly ordered films at water-air interfaces through intermolecular interactions but contribute nothing to the rodlet structure. The sequence is that of Class II hydrophobin 7 from Trichoderma asperellum (strain ATCC 204424 / CBS 433.97 / NBRC 101777).